Here is a 1805-residue protein sequence, read N- to C-terminus: MNRDYLKNLYLQRLESERYSDVFRESMSSLVSTEIINAVISLAVQDDDETMLVDLLELFLQNLESNVVFHEKLTKSSFHLLLFKRPLGIQSYTKLKSIYDRVGSRRVVPGFEHTEFLSKNFYNYCLYKHAYKDYQFDLELDAGSLGPVETNLFKDLLKAVCIENRENEHLANYIKTLPMDVSVFLAIVMPDFRIDASRLGPEDVFLVCPSQVRGYDPKQFTKAFLCSLNSEGGLCRVCGRRVLGCGFEEIDREEYLDSVSGNIEEMCFGVSHWEKIRTPRMLTTILRSLFKRPGCLECYKCLRYFPIEEQGEMEDIVLRFLRYAASILSIGNIQVSLRMFPFIRHTPRVVFSYFVILFEGFLKYSGNLFLKNVIRNVSTRNKAKFMGVRAMIFEYYLKGSIESASSTEENTKNEGGSGAVENPGRKRADDLGDLFAPLSEFFDEERKAFVRNNMFYIYPIMYSLSFPYYTPDLAFTQANNHFLIISLFLRGEESRIDEIGYGKDELYRMGVDVMIPLLCNGYFKYDVLSRFFGNVQEYIRAHLPKFLFALKKVYVERPFEFRVCVFKILKCIIEAISGNVRMLFNYLFPFVEFFMRSHEESCGTDCKMIFIEYYSSFFKNDCLVRNMSRIFPYLDAEKIARWSNVKSEDDYLDIVIGLLDTRGHFSQEMAAKKAVELLARVFGDPGKGKGFDEESFVENVLRRFFKSREFRMKIGNVYGKLKELGNDAAFLIGCISQEFLDANPLPSVCSVLIEECTPEAIARVMVEKYLFEMDPGKQDLHFFIIQETLRFIKGPLSDRMEEVVEQFRSTQYFYEYVPVHPVEGVYEKTYTFKRFLGRLYRYSLNEIAKSEMQEYFSLLKYGNLLDTLFLEFHCLCLCRLLLEAGDHKVLGMVREIANNLQEGVDKRIARFVLKLHGFTSGKHIEDQQILRISFFLKDHHNAIQTLEKMIRKERKSELFDLLQYCYYSIKDYDKVLGINSVFARPSLINLFFRFCVDKNFAAARRCLEPKPGHDGVKEESGEDHKGQAPRELDVKILMEEIIDECQDDEVTKFMNDCKKIEGDFSEWKRLESRNEVFKHFIKDCELVSKSKNLLKTLDLIAGRRELAGDNRMLLECHESLVASIRSMMDARDDMSCDEMFESLLTAEKQDTIGNSSQGLHSREYFDDFASVDMVRAERRSERIGYMDRSKSGSTSGYSSLEEFERDLKLAIIRNYRGDDDVGRCIQEIGGMLLKREWCVLYELAELNVLQGKIGDAKTSLKKVLEIFPKTSMLYKKALIRYSELLDTKTAYTSALSILKDSGKLFLLGAKKFESTEPVKAMEMYINSVIHDNQCSDEAVPRIFHLFSEMMPPGDINAGAVLLKKFLESSISLLPPYYNQILSRLSHPNQDVANVVSRIVFELMENYPSKTFWRSLIMMNSQVPSTRKRMEGIVSGLTLDNKVALSNVKRISEELTCISRSKKNELTMEEDFPAFAKMFPAGVTVPNTKVLISGVRNEVKVFNSLQRPKRICFVGSDGKNYYWLCKNQDDLRKDSRFMDLNLIINSILKKQSSRKYIRTYAVIPFSHESGIIEWIGGLSSLKAICDTYYARDGISISETACRFVHNKKIGMREWHRVASKFHPKFHLWFHDSFPHPFSWLVARNNYTQTYAIMNIVGWFMGLGDRHAENILFDSNTGDTVHVDLNCIFGKGKELQVPERVPYRLTQNIVDAFGVLGLEGSYNTSLCTTLDLFLKNKNILVSNLLSFVYDPLFEWRRKSATTPKKIIEDLWHKMDDLDACSKCDVLNEEATNDENLCMMYIGWLPFI.

A disordered region spans residues 406 to 425; the sequence is STEENTKNEGGSGAVENPGR. The region spanning 928–1420 is the FAT domain; sequence QILRISFFLK…FWRSLIMMNS (493 aa). The PI3K/PI4K catalytic domain maps to 1494–1793; it reads VRNEVKVFNS…LNEEATNDEN (300 aa). Positions 1500–1506 are G-loop; the sequence is VFNSLQR. The catalytic loop stretch occupies residues 1660–1668; the sequence is GLGDRHAEN. The activation loop stretch occupies residues 1680-1704; sequence HVDLNCIFGKGKELQVPERVPYRLT. The FATC domain maps to 1773-1805; it reads DDLDACSKCDVLNEEATNDENLCMMYIGWLPFI.

The protein belongs to the PI3/PI4-kinase family. ATM subfamily.

It is found in the nucleus. It catalyses the reaction L-seryl-[protein] + ATP = O-phospho-L-seryl-[protein] + ADP + H(+). It carries out the reaction L-threonyl-[protein] + ATP = O-phospho-L-threonyl-[protein] + ADP + H(+). Its function is as follows. Serine/threonine protein kinase which activates checkpoint signaling upon genotoxic stresses such as ionizing radiation (IR), ultraviolet light (UV), or DNA replication stalling, thereby acting as a DNA damage sensor. Recognizes the substrate consensus sequence [ST]-Q. Recruited to DNA lesions in order to initiate the DNA repair by homologous recombination. Phosphorylates histone H2A to form H2AS128ph (gamma-H2A) at sites of DNA damage, also involved in the regulation of DNA damage response mechanism. Required for cell growth and meiotic recombination. This Encephalitozoon cuniculi (strain GB-M1) (Microsporidian parasite) protein is Probable serine/threonine-protein kinase MEC1 homolog (MEC1).